Here is a 254-residue protein sequence, read N- to C-terminus: Proteasome subunit alpha type-4 (254 aa).

T60 carries the post-translational modification Phosphothreonine. Residues 235–254 (QIEQEKQEQQEQDKKKKSNH) are disordered. Residues 237–248 (EQEKQEQQEQDK) show a composition bias toward basic and acidic residues.

The protein belongs to the peptidase T1A family. The 26S proteasome consists of a 20S proteasome core and two 19S regulatory subunits. The 20S proteasome core is composed of 28 subunits that are arranged in four stacked rings, resulting in a barrel-shaped structure. The two end rings are each formed by seven alpha subunits, and the two central rings are each formed by seven beta subunits. The catalytic chamber with the active sites is on the inside of the barrel. Interacts with CIC1.

Its subcellular location is the cytoplasm. It localises to the nucleus. The proteasome degrades poly-ubiquitinated proteins in the cytoplasm and in the nucleus. It is essential for the regulated turnover of proteins and for the removal of misfolded proteins. The proteasome is a multicatalytic proteinase complex that is characterized by its ability to cleave peptides with Arg, Phe, Tyr, Leu, and Glu adjacent to the leaving group at neutral or slightly basic pH. It has an ATP-dependent proteolytic activity. This Saccharomyces cerevisiae (strain ATCC 204508 / S288c) (Baker's yeast) protein is Proteasome subunit alpha type-4 (PRE6).